The sequence spans 1041 residues: DNA polymerase catalytic subunit (1041 aa).

Residues 1–23 (MAFFNPYFKSKNKGSDMPPKQSM) form a disordered region.

Belongs to the DNA polymerase type-B family.

The protein resides in the host nucleus. It catalyses the reaction DNA(n) + a 2'-deoxyribonucleoside 5'-triphosphate = DNA(n+1) + diphosphate. The catalysed reaction is Endonucleolytic cleavage to 5'-phosphomonoester.. In terms of biological role, replicates viral genomic DNA. The replication complex is composed of six viral proteins: the DNA polymerase, processivity factor, primase, primase-associated factor, helicase, and ssDNA-binding protein. Additionally, the polymerase contains an intrinsic ribonuclease H (RNase H) activity that specifically degrades RNA/DNA heteroduplexes or duplex DNA substrates in the 5' to 3' direction. Therefore, it can catalyze the excision of the RNA primers that initiate the synthesis of Okazaki fragments at a replication fork during viral DNA replication. The polypeptide is DNA polymerase catalytic subunit (Elephantid herpesvirus 1 (isolate Asian elephant/Berlin/Kiba/1998) (EIHV-1)).